The following is a 355-amino-acid chain: Probable nitronate monooxygenase (355 aa).

Residues Asn71, Gln175, Gly180, Gly219, and Gln238 to Thr241 contribute to the FMN site.

This sequence belongs to the nitronate monooxygenase family. NMO class I subfamily. The cofactor is FMN.

The enzyme catalyses 3 propionate 3-nitronate + 3 O2 + H2O = 3 3-oxopropanoate + 2 nitrate + nitrite + H2O2 + 3 H(+). In terms of biological role, nitronate monooxygenase that uses molecular oxygen to catalyze the oxidative denitrification of alkyl nitronates. Acts on propionate 3-nitronate (P3N), the presumed physiological substrate. Probably functions in the detoxification of P3N, a metabolic poison produced by plants and fungi as a defense mechanism. The polypeptide is Probable nitronate monooxygenase (Staphylococcus saprophyticus subsp. saprophyticus (strain ATCC 15305 / DSM 20229 / NCIMB 8711 / NCTC 7292 / S-41)).